The primary structure comprises 202 residues: Probable nicotinate-nucleotide adenylyltransferase (202 aa).

The protein belongs to the NadD family.

It carries out the reaction nicotinate beta-D-ribonucleotide + ATP + H(+) = deamido-NAD(+) + diphosphate. It functions in the pathway cofactor biosynthesis; NAD(+) biosynthesis; deamido-NAD(+) from nicotinate D-ribonucleotide: step 1/1. In terms of biological role, catalyzes the reversible adenylation of nicotinate mononucleotide (NaMN) to nicotinic acid adenine dinucleotide (NaAD). The polypeptide is Probable nicotinate-nucleotide adenylyltransferase (Synechococcus sp. (strain JA-2-3B'a(2-13)) (Cyanobacteria bacterium Yellowstone B-Prime)).